Consider the following 79-residue polypeptide: Large ribosomal subunit protein uL29 (79 aa).

It belongs to the universal ribosomal protein uL29 family.

This Tropheryma whipplei (strain Twist) (Whipple's bacillus) protein is Large ribosomal subunit protein uL29.